Reading from the N-terminus, the 428-residue chain is MKLITNKQGLVGAITVPGDKSMSHRSIMFGAIAEGKTVIRHFLRADDCLGTIKAFKALGVKIEETEEEIIVHGTGFDGLKQADGPLDIGNSGTTIRLMMGILAGRDFDTVILGDESIAKRPMNRVMLPLQQMGAKMHGKDGSEFAPITINGKQSLKRMEYHMPVASAQVKSAIIFAALQAEGETIIHEKEKTRDHTEHMIRQFGGEIEMDGLTIRVKGGQTFTGQEMTVPGDVSSAAFFIVAGLITPGSEIELTHVGLNPTRTGIFDVVEQMGGSLVVKDSSRSTGKLAGTVVVKTSDLKGTEIGGDIIPRLIDEIPVIALLATQAEGTTIIKDAAELKVKETNRIDAVATELNKMGADITPTEDGLIIRGKTPLHAANVTSYGDHRIGMMLQIAALLVEEGDVELERPEAVSVSYPTFFEDIRSLLK.

3-phosphoshikimate is bound by residues Lys-20, Ser-21, and Arg-25. Position 20 (Lys-20) interacts with phosphoenolpyruvate. Residues Gly-92 and Arg-120 each contribute to the phosphoenolpyruvate site. 3-phosphoshikimate-binding residues include Ser-166, Gln-168, Asp-314, and Lys-341. Gln-168 provides a ligand contact to phosphoenolpyruvate. The active-site Proton acceptor is the Asp-314. Arg-345 and Arg-387 together coordinate phosphoenolpyruvate.

This sequence belongs to the EPSP synthase family. Monomer.

Its subcellular location is the cytoplasm. The enzyme catalyses 3-phosphoshikimate + phosphoenolpyruvate = 5-O-(1-carboxyvinyl)-3-phosphoshikimate + phosphate. Its pathway is metabolic intermediate biosynthesis; chorismate biosynthesis; chorismate from D-erythrose 4-phosphate and phosphoenolpyruvate: step 6/7. In terms of biological role, catalyzes the transfer of the enolpyruvyl moiety of phosphoenolpyruvate (PEP) to the 5-hydroxyl of shikimate-3-phosphate (S3P) to produce enolpyruvyl shikimate-3-phosphate and inorganic phosphate. The protein is 3-phosphoshikimate 1-carboxyvinyltransferase of Listeria monocytogenes serotype 4b (strain CLIP80459).